The chain runs to 133 residues: Small ribosomal subunit protein uS8 (133 aa).

The protein belongs to the universal ribosomal protein uS8 family. In terms of assembly, part of the 30S ribosomal subunit. Contacts proteins S5 and S12.

In terms of biological role, one of the primary rRNA binding proteins, it binds directly to 16S rRNA central domain where it helps coordinate assembly of the platform of the 30S subunit. The protein is Small ribosomal subunit protein uS8 of Chlorobaculum parvum (strain DSM 263 / NCIMB 8327) (Chlorobium vibrioforme subsp. thiosulfatophilum).